The primary structure comprises 203 residues: Cytochrome c biogenesis CcmF N-terminal-like mitochondrial protein 2 (203 aa).

2 helical membrane-spanning segments follow: residues 44-64 and 143-163; these read IWIL…SWWA and IFLW…FYQM.

Belongs to the CcmF/CycK/Ccl1/NrfE/CcsA family. Interacts with CCMFC, CCMFN1, CCMH and CYTC-1.

The protein resides in the mitochondrion inner membrane. Functionally, forms a complex with CCMFC, CCMFN1 and CCMH that performs the assembly of heme with c-type apocytochromes in mitochondria. The sequence is that of Cytochrome c biogenesis CcmF N-terminal-like mitochondrial protein 2 from Arabidopsis thaliana (Mouse-ear cress).